The following is a 224-amino-acid chain: Ribonuclease 3 (224 aa).

One can recognise an RNase III domain in the interval 4–126; sequence LDRLQHKIGY…IIGAMSLDSN (123 aa). Glutamate 39 serves as a coordination point for Mg(2+). Residue aspartate 43 is part of the active site. Aspartate 112 and glutamate 115 together coordinate Mg(2+). Glutamate 115 is an active-site residue. In terms of domain architecture, DRBM spans 153–223; sequence DPKTRLQEYL…AEQILKVLDI (71 aa).

Belongs to the ribonuclease III family. In terms of assembly, homodimer. Mg(2+) serves as cofactor.

It localises to the cytoplasm. It catalyses the reaction Endonucleolytic cleavage to 5'-phosphomonoester.. Functionally, digests double-stranded RNA. Involved in the processing of primary rRNA transcript to yield the immediate precursors to the large and small rRNAs (23S and 16S). Processes some mRNAs, and tRNAs when they are encoded in the rRNA operon. Processes pre-crRNA and tracrRNA of type II CRISPR loci if present in the organism. This is Ribonuclease 3 from Actinobacillus succinogenes (strain ATCC 55618 / DSM 22257 / CCUG 43843 / 130Z).